A 177-amino-acid chain; its full sequence is ATP synthase subunit delta (177 aa).

Belongs to the ATPase delta chain family. As to quaternary structure, F-type ATPases have 2 components, F(1) - the catalytic core - and F(0) - the membrane proton channel. F(1) has five subunits: alpha(3), beta(3), gamma(1), delta(1), epsilon(1). F(0) has three main subunits: a(1), b(2) and c(10-14). The alpha and beta chains form an alternating ring which encloses part of the gamma chain. F(1) is attached to F(0) by a central stalk formed by the gamma and epsilon chains, while a peripheral stalk is formed by the delta and b chains.

Its subcellular location is the cell inner membrane. Its function is as follows. F(1)F(0) ATP synthase produces ATP from ADP in the presence of a proton or sodium gradient. F-type ATPases consist of two structural domains, F(1) containing the extramembraneous catalytic core and F(0) containing the membrane proton channel, linked together by a central stalk and a peripheral stalk. During catalysis, ATP synthesis in the catalytic domain of F(1) is coupled via a rotary mechanism of the central stalk subunits to proton translocation. This protein is part of the stalk that links CF(0) to CF(1). It either transmits conformational changes from CF(0) to CF(1) or is implicated in proton conduction. The polypeptide is ATP synthase subunit delta (Neisseria meningitidis serogroup B (strain ATCC BAA-335 / MC58)).